Consider the following 505-residue polypeptide: Lysine--tRNA ligase 1 (505 aa).

Residues Asp415 and Glu422 each coordinate Mg(2+).

This sequence belongs to the class-II aminoacyl-tRNA synthetase family. Homodimer. Mg(2+) is required as a cofactor.

Its subcellular location is the cytoplasm. The catalysed reaction is tRNA(Lys) + L-lysine + ATP = L-lysyl-tRNA(Lys) + AMP + diphosphate. This is Lysine--tRNA ligase 1 (lysS1) from Mycobacterium bovis (strain ATCC BAA-935 / AF2122/97).